The primary structure comprises 921 residues: Phototropin-1B (921 aa).

The span at 1–11 (MASKGTEGGHG) shows a compositional bias: gly residues. Disordered regions lie at residues 1-59 (MASK…SPFL) and 88-118 (TGLPQGVSARPSSGSARTSSEDNPQQQQSAA). A compositionally biased stretch (low complexity) spans 40 to 51 (SSASSFRTAAAA). Residues 97–117 (RPSSGSARTSSEDNPQQQQSA) show a composition bias toward polar residues. Residues 123-197 (VSEELRAALS…KIRQSLANGS (75 aa)) form the PAS 1 domain. Residues 172-177 (NCRFLQ), Arg-190, Asn-205, Asn-215, and Gln-236 contribute to the FMN site. Cys-173 carries the post-translational modification S-4a-FMN cysteine. The region spanning 197–251 (SNYCGRILNYKKDGTPFWNLLTIAPIKDEDGRLLKFIGMQVEVSKYTEGKKDTVV) is the PAC 1 domain. Residues 286–295 (RSLSESSNNT) show a composition bias toward polar residues. Disordered stretches follow at residues 286–345 (RSLS…QVNR) and 366–391 (EKNMLKPRDEDPLIDSDDERPESFED). Basic and acidic residues-rich tracts occupy residues 312–321 (PSKRSSESGS) and 366–376 (EKNMLKPRDED). Residues 400–473 (RGIDLATTLE…RKIRDAIDNQ (74 aa)) enclose the PAS 2 domain. Residues 449–454 (NCRFLQ), Arg-467, Asn-482, Asn-492, and Gln-513 each bind FMN. Cys-450 carries the post-translational modification S-4a-FMN cysteine. One can recognise a PAC 2 domain in the interval 474 to 528 (AEVTVQLINYTKSGKKFWNLFHLQPMRDQKGDVQYFIGVQLDGTEHVQDDAAKEG). Residues 594–881 (FRPVKPLGSG…ANEIKGHPFF (288 aa)) form the Protein kinase domain. ATP contacts are provided by residues 600–608 (LGSGDTGSV) and Lys-623. Residue Asp-719 is the Proton acceptor of the active site.

This sequence belongs to the protein kinase superfamily. Ser/Thr protein kinase family. Homodimer. It depends on FMN as a cofactor. Post-translationally, autophosphorylated in response to blue light irradiation. In terms of processing, 2 molecules of FMN bind covalently to cysteines after exposure to blue light and are reversed in the dark.

It catalyses the reaction L-seryl-[protein] + ATP = O-phospho-L-seryl-[protein] + ADP + H(+). The catalysed reaction is L-threonyl-[protein] + ATP = O-phospho-L-threonyl-[protein] + ADP + H(+). Its function is as follows. Protein kinase that acts as a blue light photoreceptor in a signal-transduction pathway for phototropic responses. Regulates a wide range of physiological activities in plants that maximize the efficiency of photosynthesis, such as chloroplast relocations, stomata opening, and leaf expansion. The chain is Phototropin-1B (PHOT1B) from Oryza sativa subsp. japonica (Rice).